The chain runs to 60 residues: Large ribosomal subunit protein bL32 (60 aa).

The disordered stretch occupies residues Met1–Thr23. The span at His7 to Tyr20 shows a compositional bias: basic residues.

This sequence belongs to the bacterial ribosomal protein bL32 family.

The sequence is that of Large ribosomal subunit protein bL32 from Streptococcus equi subsp. equi (strain 4047).